The sequence spans 298 residues: Inosose dehydratase (298 aa).

It belongs to the IolE/MocC family. Requires glutathione as cofactor. Co(2+) is required as a cofactor. The cofactor is Mn(2+).

The enzyme catalyses scyllo-inosose = 3D-3,5/4-trihydroxycyclohexane-1,2-dione + H2O. The protein operates within polyol metabolism; myo-inositol degradation into acetyl-CoA; acetyl-CoA from myo-inositol: step 2/7. Its function is as follows. Catalyzes the dehydration of inosose (2-keto-myo-inositol, 2KMI or 2,4,6/3,5-pentahydroxycyclohexanone) to 3D-(3,5/4)-trihydroxycyclohexane-1,2-dione (D-2,3-diketo-4-deoxy-epi-inositol). This Clostridium botulinum (strain Eklund 17B / Type B) protein is Inosose dehydratase.